A 207-amino-acid polypeptide reads, in one-letter code: Large ribosomal subunit protein uL4 (207 aa).

Belongs to the universal ribosomal protein uL4 family. In terms of assembly, part of the 50S ribosomal subunit.

One of the primary rRNA binding proteins, this protein initially binds near the 5'-end of the 23S rRNA. It is important during the early stages of 50S assembly. It makes multiple contacts with different domains of the 23S rRNA in the assembled 50S subunit and ribosome. Functionally, forms part of the polypeptide exit tunnel. This is Large ribosomal subunit protein uL4 from Rickettsia africae (strain ESF-5).